Consider the following 191-residue polypeptide: AFPAMPLSSLFANAVLRAQHLHLLAADTYKEFERTYIPEEQRHSNKISQSASCYSETIPAPTGKDDAEQKSDMELLRFSLILIQSWLNPVQFLSRVFTNSLVFGTSDRVYEKLRDLEEGIQALMRELEDGSLRGFQVLRPTYDKFDINLRNEDALLKNYGLLSCFKKDLHKVETYLKLMKCRRFGESNCTI.

His-20 is a binding site for Zn(2+). Cysteines 53 and 164 form a disulfide. Glu-173 provides a ligand contact to Zn(2+). A disulfide bridge links Cys-181 with Cys-189.

The protein belongs to the somatotropin/prolactin family.

The protein resides in the secreted. Functionally, growth hormone plays an important role in growth control and is involved in the regulation of several anabolic processes. Implicated as an osmoregulatory substance important for seawater adaptation. The protein is Somatotropin (GH) of Chelonia mydas (Green sea-turtle).